Here is a 123-residue protein sequence, read N- to C-terminus: Small ribosomal subunit protein uS12 (123 aa).

A 3-methylthioaspartic acid modification is found at Asp-89.

The protein belongs to the universal ribosomal protein uS12 family. In terms of assembly, part of the 30S ribosomal subunit. Contacts proteins S8 and S17. May interact with IF1 in the 30S initiation complex.

In terms of biological role, with S4 and S5 plays an important role in translational accuracy. Interacts with and stabilizes bases of the 16S rRNA that are involved in tRNA selection in the A site and with the mRNA backbone. Located at the interface of the 30S and 50S subunits, it traverses the body of the 30S subunit contacting proteins on the other side and probably holding the rRNA structure together. The combined cluster of proteins S8, S12 and S17 appears to hold together the shoulder and platform of the 30S subunit. The sequence is that of Small ribosomal subunit protein uS12 from Gluconobacter oxydans (strain 621H) (Gluconobacter suboxydans).